A 117-amino-acid chain; its full sequence is Large ribosomal subunit protein bL20 (117 aa).

Belongs to the bacterial ribosomal protein bL20 family.

Its function is as follows. Binds directly to 23S ribosomal RNA and is necessary for the in vitro assembly process of the 50S ribosomal subunit. It is not involved in the protein synthesizing functions of that subunit. The sequence is that of Large ribosomal subunit protein bL20 from Histophilus somni (strain 129Pt) (Haemophilus somnus).